The chain runs to 256 residues: Thiazole synthase (256 aa).

Catalysis depends on Lys95, which acts as the Schiff-base intermediate with DXP. 1-deoxy-D-xylulose 5-phosphate is bound by residues Gly156, 182 to 183 (AG), and 204 to 205 (NT).

It belongs to the ThiG family. In terms of assembly, homotetramer. Forms heterodimers with either ThiH or ThiS.

It is found in the cytoplasm. It carries out the reaction [ThiS sulfur-carrier protein]-C-terminal-Gly-aminoethanethioate + 2-iminoacetate + 1-deoxy-D-xylulose 5-phosphate = [ThiS sulfur-carrier protein]-C-terminal Gly-Gly + 2-[(2R,5Z)-2-carboxy-4-methylthiazol-5(2H)-ylidene]ethyl phosphate + 2 H2O + H(+). It functions in the pathway cofactor biosynthesis; thiamine diphosphate biosynthesis. Catalyzes the rearrangement of 1-deoxy-D-xylulose 5-phosphate (DXP) to produce the thiazole phosphate moiety of thiamine. Sulfur is provided by the thiocarboxylate moiety of the carrier protein ThiS. In vitro, sulfur can be provided by H(2)S. In Salmonella choleraesuis (strain SC-B67), this protein is Thiazole synthase.